Consider the following 509-residue polypeptide: Maturase K (509 aa).

It belongs to the intron maturase 2 family. MatK subfamily.

The protein localises to the plastid. Its subcellular location is the chloroplast. Usually encoded in the trnK tRNA gene intron. Probably assists in splicing its own and other chloroplast group II introns. This is Maturase K from Otacanthus azureus (Brazilian snapdragon).